The sequence spans 142 residues: Lipoprotein MlpI (142 aa).

Positions 1–17 are cleaved as a signal peptide; that stretch reads MKIINILFCLFLLMLNS. Cys-18 carries the N-palmitoyl cysteine lipid modification. The S-diacylglycerol cysteine moiety is linked to residue Cys-18. Residues 22–54 form a disordered region; it reads DTNTSQTKSRQKRDLTQKEATQEKPKSKEDLLR. Positions 33-54 are enriched in basic and acidic residues; sequence KRDLTQKEATQEKPKSKEDLLR.

It belongs to the Multicopy lipoprotein (Mlp) family.

The protein localises to the cell outer membrane. An outer membrane protein that may participate in pathogenesis. Some human Lyme disease patients have antibodies against this protein. The Mlp proteins probably undergo intragenic recombination, generating new alleles. The protein is Lipoprotein MlpI of Borreliella burgdorferi (strain ATCC 35210 / DSM 4680 / CIP 102532 / B31) (Borrelia burgdorferi).